Here is a 109-residue protein sequence, read N- to C-terminus: Class I hydrophobin 2 (109 aa).

A signal peptide spans 1–18 (MQFKLAFVSIALATLAVA). Disulfide bonds link cysteine 30–cysteine 90, cysteine 37–cysteine 84, cysteine 38–cysteine 71, and cysteine 91–cysteine 104.

This sequence belongs to the fungal hydrophobin family. In terms of assembly, self-assembles to form functional amyloid fibrils called rodlets. Self-assembly into fibrillar rodlets occurs spontaneously at hydrophobic:hydrophilic interfaces and the rodlets further associate laterally to form amphipathic monolayers.

Its subcellular location is the secreted. It is found in the cell wall. Its function is as follows. Aerial growth, conidiation, and dispersal of filamentous fungi in the environment rely upon a capability of their secreting small amphipathic proteins called hydrophobins (HPBs) with low sequence identity. Class I can self-assemble into an outermost layer of rodlet bundles on aerial cell surfaces, conferring cellular hydrophobicity that supports fungal growth, development and dispersal; whereas Class II form highly ordered films at water-air interfaces through intermolecular interactions but contribute nothing to the rodlet structure. Hyd2 is a class I hydrophobin that may allow the dikaryotic mycelia to attach to the hydrophobic surface of the substrate. Higher expression in dikaryotic mycelia than in monokaryotic mycelia indicates that dikaryons require more hyd2 hydrophobin than the monokaryons, presumably for a higher rate of hyphal growth. This chain is Class I hydrophobin 2, found in Lentinula edodes (Shiitake mushroom).